The sequence spans 410 residues: Protein LTV1 homolog (410 aa).

Disordered regions lie at residues V142 to Y165 and E325 to L378. Composition is skewed to acidic residues over residues D151–Y165 and E325–K345. Basic and acidic residues predominate over residues P357–S366. A coiled-coil region spans residues E363 to M389. Positions L367–L378 are enriched in basic residues.

This sequence belongs to the LTV1 family.

The sequence is that of Protein LTV1 homolog from Caenorhabditis elegans.